The primary structure comprises 473 residues: Reticulon-4 receptor (473 aa).

Positions 1–26 are cleaved as a signal peptide; the sequence is MKRASSGGSRLLAWVLWLQAWRVATP. Disulfide bonds link Cys-27–Cys-33 and Cys-31–Cys-43. The region spanning 27 to 57 is the LRRNT domain; it reads CPGACVCYNEPKVTTSCPQQGLQAVPTGIPA. 9 LRR repeats span residues 56–79, 80–103, 105–128, 129–152, 153–176, 178–200, 202–224, 225–248, and 250–273; these read PASSQRIFLHGNRISYVPAASFQS, CRNLTILWLHSNALAGIDAAAFTG, TLLEQLDLSDNAQLRVVDPTTFRG, LGHLHTLHLDRCGLQELGPGLFRG, LAALQYLYLQDNNLQALPDNTFRD, GNLTHLFLHGNRIPSVPEHAFRG, HSLDRLLLHQNHVARVHPHAFRD, LGRLMTLYLFANNLSMLPAEVLVP, and RSLQYLRLNDNPWVCDCRARPLWA. N-linked (GlcNAc...) asparagine glycosylation occurs at Asn-82. The LRRCT domain maps to 260–310; that stretch reads NPWVCDCRARPLWAWLQKFRGSSSEVPCNLPQRLAGRDLKRLAASDLEGCA. 3 disulfides stabilise this stretch: Cys-264-Cys-287, Cys-266-Cys-335, and Cys-309-Cys-336. The segment at 346 to 446 is disordered; it reads VLEPGRPASA…GSSGTGDAEG (101 aa). Asn-372 is a glycosylation site (N-linked (GlcNAc...) asparagine). A compositionally biased stretch (basic residues) spans 413 to 429; it reads PRRRPGCSRKNRTRSHC. Positions 434-445 are enriched in gly residues; that stretch reads AGSGSSGTGDAE. Residue Ser-447 is the site of GPI-anchor amidated serine attachment. Residues 448–473 constitute a propeptide, removed in mature form; sequence GALPALACSLAPLGLALVLWTVLGPC.

Belongs to the Nogo receptor family. In terms of assembly, homodimer. Interacts with MAG. Interacts with RTN4 and OMG. Interacts with LINGO1 and NGFR. Interacts with KIAA0319L. Interacts with OLFM1; this inhibits interaction with LINGO1 and NGFR. Post-translationally, N-glycosylated. O-glycosylated. Contains terminal sialic acid groups on its glycan chains. In terms of tissue distribution, detected in embryonic cerebellum, in spinal cord motor neurons and in dorsal root ganglia. Detected in adult brain, in neocortex, hippocampus, striatum, thalamus and dorsal root ganglion neurons (at protein level).

It localises to the cell membrane. The protein localises to the membrane raft. It is found in the cell projection. Its subcellular location is the dendrite. The protein resides in the perikaryon. It localises to the axon. Receptor for RTN4, OMG and MAG. Functions as a receptor for the sialylated gangliosides GT1b and GM1. Besides, functions as a receptor for chondroitin sulfate proteoglycans. Can also bind heparin. Intracellular signaling cascades are triggered via the coreceptor NGFR. Signaling mediates activation of Rho and downstream reorganization of the actin cytoskeleton. Mediates axonal growth inhibition. May play a role in regulating axon regeneration and neuronal plasticity in the adult central nervous system. Plays a role in postnatal brain development. Required for normal axon migration across the brain midline and normal formation of the corpus callosum. Protects motoneurons against apoptosis; protection against apoptosis is probably mediated via interaction with MAG. Acts in conjunction with RTN4 and LINGO1 in regulating neuronal precursor cell motility during cortical development. Like other family members, plays a role in restricting the number dendritic spines and the number of synapses that are formed during brain development. The protein is Reticulon-4 receptor (Rtn4r) of Rattus norvegicus (Rat).